We begin with the raw amino-acid sequence, 192 residues long: Lumican (192 aa).

LRR repeat units lie at residues 1–23, 26–46, 47–68, 69–90, 94–114, 115–136, 139–162, 164–185, and 186–192; these read LQWLILDHNLLENSKIKGKVFSK, QLKKLHINHNNLTESVGPLPK, SLEDLQLTHNKITKLGSFDGLL, NLTFVHLQHNQLKEDAVSAAFK, SLEYLDLSFNQMSKLPSGLPA, SLLTLYLDNNKISDIPDEYFKR, GLQYLRLSHNELADSGIPGNSFNI, SLVELDLSYNKLKNIPTVNENL, and ENYYLEV.

The protein belongs to the small leucine-rich proteoglycan (SLRP) family. SLRP class II subfamily. Binds to laminin. Sulfated on tyrosine residue(s). Post-translationally, contains keratan sulfate.

It is found in the secreted. The protein localises to the extracellular space. The protein resides in the extracellular matrix. This chain is Lumican (LUM), found in Oryctolagus cuniculus (Rabbit).